The primary structure comprises 193 residues: Crossover junction endodeoxyribonuclease RuvC (193 aa).

Residues D7, E68, and D141 contribute to the active site. D7, E68, and D141 together coordinate Mg(2+).

The protein belongs to the RuvC family. As to quaternary structure, homodimer which binds Holliday junction (HJ) DNA. The HJ becomes 2-fold symmetrical on binding to RuvC with unstacked arms; it has a different conformation from HJ DNA in complex with RuvA. In the full resolvosome a probable DNA-RuvA(4)-RuvB(12)-RuvC(2) complex forms which resolves the HJ. It depends on Mg(2+) as a cofactor.

The protein localises to the cytoplasm. It carries out the reaction Endonucleolytic cleavage at a junction such as a reciprocal single-stranded crossover between two homologous DNA duplexes (Holliday junction).. The RuvA-RuvB-RuvC complex processes Holliday junction (HJ) DNA during genetic recombination and DNA repair. Endonuclease that resolves HJ intermediates. Cleaves cruciform DNA by making single-stranded nicks across the HJ at symmetrical positions within the homologous arms, yielding a 5'-phosphate and a 3'-hydroxyl group; requires a central core of homology in the junction. The consensus cleavage sequence is 5'-(A/T)TT(C/G)-3'. Cleavage occurs on the 3'-side of the TT dinucleotide at the point of strand exchange. HJ branch migration catalyzed by RuvA-RuvB allows RuvC to scan DNA until it finds its consensus sequence, where it cleaves and resolves the cruciform DNA. The polypeptide is Crossover junction endodeoxyribonuclease RuvC (Bifidobacterium adolescentis (strain ATCC 15703 / DSM 20083 / NCTC 11814 / E194a)).